The primary structure comprises 1378 residues: F-box protein At3g54460 (1378 aa).

Over residues 65–96 the composition is skewed to basic and acidic residues; sequence GDHDVENSGTIEDGRLETPQKRRKCVEGESSG. Residues 65–113 form a disordered region; the sequence is GDHDVENSGTIEDGRLETPQKRRKCVEGESSGKRKTPKSKRRVLSGSKE. Over residues 97 to 107 the composition is skewed to basic residues; it reads KRKTPKSKRRV. The F-box domain occupies 282–328; the sequence is VSGVWDLSDDVLISILMKLDTKDLFSIAAVCRLFRSLTSLIVPCMNL. Residues 571 to 622 form a CW-type zinc finger; sequence DVESDIWMQCDSCSKWRRIIDEGVSVTGSAWFCSNNNDPAYQSCNDPEELWD. Residues cysteine 580, cysteine 583, cysteine 603, and cysteine 614 each contribute to the Zn(2+) site. Residues 720–885 enclose the Helicase ATP-binding domain; it reads KWFYPKFLEN…LSHIQPLLKF (166 aa). 733-740 contributes to the ATP binding site; that stretch reads DVPALKVA. The DEAH box signature appears at 834–837; the sequence is DEGH. A Helicase C-terminal domain is found at 1185–1324; that stretch reads DCGSQMVFVD…DAEKSDRLLS (140 aa).

It belongs to the helicase family.

The polypeptide is F-box protein At3g54460 (Arabidopsis thaliana (Mouse-ear cress)).